Here is a 410-residue protein sequence, read N- to C-terminus: MIDMLVLRLPFIDSLVCSRLSGNDLIAFVDLSKIATLSGMNLSARTVEYHIDGDLTVSGLSHPFESLPTHYSGIAFKIYEGSKNFYPCVEIKASPAKVLQGHNVFGTTDLALCSEALLLNFANSLPCLYDLLDVNATTISRIDATFSARAPNENIAKQVIDHLRNVSNGQTKSTRSQNWESTVTWNETSRHRTLVAYLKHVELQHQIQQLSSKPSAKMTSYQKEQLKVLSNPDLLEFASGLVRFEARIETRYLKSFGLPLNLFDAIRFASDYNSQGKDLIFDLWSFSFSELFKAFEGDSMNIYDDSAVLDAIQSKHFTITPSGKTSFAKASRYFGFYRRLVNEGYDSVALTMPRNSFWRYVSALVECGIPKSQLMNLSTCNNVVPLVRFINVDFSSQRPDWYNEPVLKIA.

Position 1 is an N-formylmethionine (M1).

This sequence belongs to the inovirus G2P protein family.

The enzyme catalyses ATP + (deoxyribonucleotide)n-3'-hydroxyl + 5'-phospho-(deoxyribonucleotide)m = (deoxyribonucleotide)n+m + AMP + diphosphate.. Its function is as follows. Isoform G2P plays an essential role in viral DNA replication. Binds the origin of replication and cleaves the dsDNA replicative form I (RFI) and becomes covalently bound to it via phosphotyrosine bond, generating the dsDNA replicative form II (RFII). In turn, viral DNA replication initiates at the 3'-OH of the cleavage site. After one round of rolling circle synthesis, protein G2P is linked to the newly synthesized ssDNA and joins the ends of the displaced strand to generate a circular single-stranded molecule ready to be packed into a virion. Isoform G10P protein binds to double-stranded DNA and prevents hydrolysis by nucleases. Additionally, G10P is an inhibitor of DNA replication and may have a role in the transition from semiconservative replicative form DNA replication to single-stranded DNA synthesis in the life cycle. The polypeptide is Replication-associated protein G2P (II) (Enterobacteria phage f1 (Bacteriophage f1)).